A 227-amino-acid polypeptide reads, in one-letter code: 7-cyano-7-deazaguanine synthase (227 aa).

16 to 26 (FSGGQDSTTCL) contacts ATP. Residues cysteine 194, cysteine 202, cysteine 205, and cysteine 208 each contribute to the Zn(2+) site.

Belongs to the QueC family. The cofactor is Zn(2+).

The enzyme catalyses 7-carboxy-7-deazaguanine + NH4(+) + ATP = 7-cyano-7-deazaguanine + ADP + phosphate + H2O + H(+). It participates in purine metabolism; 7-cyano-7-deazaguanine biosynthesis. In terms of biological role, catalyzes the ATP-dependent conversion of 7-carboxy-7-deazaguanine (CDG) to 7-cyano-7-deazaguanine (preQ(0)). The protein is 7-cyano-7-deazaguanine synthase of Haemophilus influenzae (strain 86-028NP).